Reading from the N-terminus, the 312-residue chain is Putative S-adenosyl-L-methionine-dependent methyltransferase Mkms_0097 (312 aa).

S-adenosyl-L-methionine is bound by residues Asp-134 and 163–164 (DL).

This sequence belongs to the UPF0677 family.

Its function is as follows. Exhibits S-adenosyl-L-methionine-dependent methyltransferase activity. This is Putative S-adenosyl-L-methionine-dependent methyltransferase Mkms_0097 from Mycobacterium sp. (strain KMS).